Consider the following 272-residue polypeptide: Ribosomal RNA small subunit methyltransferase A (272 aa).

S-adenosyl-L-methionine contacts are provided by Asn27, Leu29, Gly54, Glu75, Asp97, and Asn117.

Belongs to the class I-like SAM-binding methyltransferase superfamily. rRNA adenine N(6)-methyltransferase family. RsmA subfamily.

It is found in the cytoplasm. The catalysed reaction is adenosine(1518)/adenosine(1519) in 16S rRNA + 4 S-adenosyl-L-methionine = N(6)-dimethyladenosine(1518)/N(6)-dimethyladenosine(1519) in 16S rRNA + 4 S-adenosyl-L-homocysteine + 4 H(+). Its function is as follows. Specifically dimethylates two adjacent adenosines (A1518 and A1519) in the loop of a conserved hairpin near the 3'-end of 16S rRNA in the 30S particle. May play a critical role in biogenesis of 30S subunits. This chain is Ribosomal RNA small subunit methyltransferase A, found in Malacoplasma penetrans (strain HF-2) (Mycoplasma penetrans).